Consider the following 185-residue polypeptide: Probable nicotinate-nucleotide adenylyltransferase (185 aa).

It belongs to the NadD family.

The catalysed reaction is nicotinate beta-D-ribonucleotide + ATP + H(+) = deamido-NAD(+) + diphosphate. Its pathway is cofactor biosynthesis; NAD(+) biosynthesis; deamido-NAD(+) from nicotinate D-ribonucleotide: step 1/1. Functionally, catalyzes the reversible adenylation of nicotinate mononucleotide (NaMN) to nicotinic acid adenine dinucleotide (NaAD). The chain is Probable nicotinate-nucleotide adenylyltransferase from Cereibacter sphaeroides (strain ATCC 17025 / ATH 2.4.3) (Rhodobacter sphaeroides).